Reading from the N-terminus, the 246-residue chain is Enolase-phosphatase E1 (246 aa).

Residues aspartate 15 and glutamate 17 each contribute to the Mg(2+) site. Residues 134–135 (SS) and lysine 174 each bind substrate. Residue aspartate 201 coordinates Mg(2+).

This sequence belongs to the HAD-like hydrolase superfamily. MasA/MtnC family. As to quaternary structure, monomer. Requires Mg(2+) as cofactor.

It localises to the cytoplasm. Its subcellular location is the nucleus. It catalyses the reaction 5-methylsulfanyl-2,3-dioxopentyl phosphate + H2O = 1,2-dihydroxy-5-(methylsulfanyl)pent-1-en-3-one + phosphate. The protein operates within amino-acid biosynthesis; L-methionine biosynthesis via salvage pathway; L-methionine from S-methyl-5-thio-alpha-D-ribose 1-phosphate: step 3/6. Its pathway is amino-acid biosynthesis; L-methionine biosynthesis via salvage pathway; L-methionine from S-methyl-5-thio-alpha-D-ribose 1-phosphate: step 4/6. Functionally, bifunctional enzyme that catalyzes the enolization of 2,3-diketo-5-methylthiopentyl-1-phosphate (DK-MTP-1-P) into the intermediate 2-hydroxy-3-keto-5-methylthiopentenyl-1-phosphate (HK-MTPenyl-1-P), which is then dephosphorylated to form the acireductone 1,2-dihydroxy-3-keto-5-methylthiopentene (DHK-MTPene). This chain is Enolase-phosphatase E1, found in Debaryomyces hansenii (strain ATCC 36239 / CBS 767 / BCRC 21394 / JCM 1990 / NBRC 0083 / IGC 2968) (Yeast).